The chain runs to 513 residues: Zinc finger CCCH-type with G patch domain-containing protein (513 aa).

Residues 155 to 178 (PCSYYLEGECRFDEAKCRFSHGAL) form a C3H1-type zinc finger. Residues 252–261 (DQDEDDELSS) show a composition bias toward acidic residues. The interval 252–283 (DQDEDDELSSEESNSSMNDNSSDEAESDMDDL) is disordered. A compositionally biased stretch (low complexity) spans 262–271 (EESNSSMNDN). A compositionally biased stretch (acidic residues) spans 272-283 (SSDEAESDMDDL). The region spanning 312-358 (TRGIGSKLMEKMGYIHGTGLGSDGRGIVTPVSAQILPQGRSLDACME) is the G-patch domain. A compositionally biased stretch (polar residues) spans 478 to 495 (VQMQSHKQELATLQAQER). The segment at 478 to 513 (VQMQSHKQELATLQAQERSLSKEQQTRKSKNKMFEF) is disordered. Residues 496 to 513 (SLSKEQQTRKSKNKMFEF) show a composition bias toward basic and acidic residues.

The protein resides in the nucleus. Its function is as follows. Transcription repressor. This chain is Zinc finger CCCH-type with G patch domain-containing protein, found in Drosophila melanogaster (Fruit fly).